The sequence spans 213 residues: Probable lipid phosphate phosphatase beta (213 aa).

5 helical membrane-spanning segments follow: residues 30 to 50, 67 to 87, 118 to 138, 158 to 178, and 181 to 201; these read PFLPPFVLLLLEISADFRFSF, VPFLLGLLFDLIFVGIVKLIF, VFFVAASVHFFSAAAEASMTG, VEVVVVVWIWATVTAISRILL, and HYVLDVAAGAFLGIVEALFAL.

Belongs to the PA-phosphatase related phosphoesterase family.

The protein resides in the membrane. The sequence is that of Probable lipid phosphate phosphatase beta (LPPB) from Arabidopsis thaliana (Mouse-ear cress).